The following is a 376-amino-acid chain: uncharacterized protein (376 aa).

A run of 2 helical transmembrane segments spans residues Q153–A173 and H188–Y208.

It localises to the membrane. This is an uncharacterized protein from Saccharomyces cerevisiae (strain ATCC 204508 / S288c) (Baker's yeast).